The following is a 506-amino-acid chain: Exopolysaccharide phosphotransferase NFA_48680 (506 aa).

Positions 484–506 (PAPWERVSAPSRRPLPESTAGAA) are disordered.

This sequence belongs to the stealth family.

This is Exopolysaccharide phosphotransferase NFA_48680 from Nocardia farcinica (strain IFM 10152).